We begin with the raw amino-acid sequence, 250 residues long: 2,3-bisphosphoglycerate-dependent phosphoglycerate mutase (250 aa).

Residues 10 to 17, 23 to 24, Arg62, 89 to 92, Lys100, 116 to 117, and 185 to 186 contribute to the substrate site; these read RHGESQWN, TG, ERHY, RR, and GN. Catalysis depends on His11, which acts as the Tele-phosphohistidine intermediate. Glu89 acts as the Proton donor/acceptor in catalysis.

The protein belongs to the phosphoglycerate mutase family. BPG-dependent PGAM subfamily. As to quaternary structure, homodimer.

The catalysed reaction is (2R)-2-phosphoglycerate = (2R)-3-phosphoglycerate. It functions in the pathway carbohydrate degradation; glycolysis; pyruvate from D-glyceraldehyde 3-phosphate: step 3/5. In terms of biological role, catalyzes the interconversion of 2-phosphoglycerate and 3-phosphoglycerate. This is 2,3-bisphosphoglycerate-dependent phosphoglycerate mutase from Pectobacterium atrosepticum (strain SCRI 1043 / ATCC BAA-672) (Erwinia carotovora subsp. atroseptica).